A 283-amino-acid polypeptide reads, in one-letter code: NADPH-dependent 3-dehydrocapnine reductase (283 aa).

The Proton acceptor role is filled by Tyr153.

The protein belongs to the short-chain dehydrogenases/reductases (SDR) family.

It carries out the reaction 3-oxocapnine + NADPH + H(+) = capnine + NADP(+). It functions in the pathway lipid metabolism. In terms of biological role, reductase involved in the biosynthesis of capnine, a sulfonolipid present in the outer membrane of gliding Bacteroidetes and essential for gliding motility. Catalyzes the reduction of 3-dehydrocapnine to capnine. This Ornithobacterium rhinotracheale protein is NADPH-dependent 3-dehydrocapnine reductase.